A 209-amino-acid polypeptide reads, in one-letter code: Cilia- and flagella-associated protein 418 (209 aa).

Positions 1–76 (MAKDLDELLD…LINEIFEEPD (76 aa)) are required for interaction with FAM161A. Residues 24 to 58 (LDLGERPKGDGGGGSHSGDRNGAQEKETLRSTETF) are disordered. Positions 40-58 (SGDRNGAQEKETLRSTETF) are enriched in basic and acidic residues.

In terms of assembly, interacts (via N-terminus) with FAM161A (via central region); the interaction is direct. Expressed in multiple tissues, including the brain, kidney, lung, spleen, heart, trachea and testis. Expressed in the retina (at protein level).

It is found in the cytoplasm. The protein resides in the photoreceptor inner segment. In terms of biological role, may be involved in photoreceptor outer segment disk morphogenesis. The polypeptide is Cilia- and flagella-associated protein 418 (Mus musculus (Mouse)).